We begin with the raw amino-acid sequence, 126 residues long: Small ribosomal subunit protein uS12m (126 aa).

Disordered stretches follow at residues 1-27 and 106-126; these read MPTM…LNKC and GIPG…KDYI. Composition is skewed to basic residues over residues 12 to 23 and 109 to 120; these read RESKRRTKRTRA and GRRRGRSKYGTK.

The protein belongs to the universal ribosomal protein uS12 family.

The protein resides in the mitochondrion. Functionally, protein S12 is involved in the translation initiation step. This chain is Small ribosomal subunit protein uS12m (RPS12), found in Marchantia polymorpha (Common liverwort).